Reading from the N-terminus, the 247-residue chain is ATP synthase subunit a, chloroplastic (247 aa).

5 helical membrane passes run 38–58, 95–115, 134–154, 199–219, and 220–240; these read QVLITSWVVIAILLGSATIAV, VPFIGTMFLFIFVSNWSGALL, INTTVALALLTSVAYFYAGLT, LVVVVLVSLVPSVVPIPVMFL, and GLFTSGIQALIFATLAAAYIG.

The protein belongs to the ATPase A chain family. F-type ATPases have 2 components, CF(1) - the catalytic core - and CF(0) - the membrane proton channel. CF(1) has five subunits: alpha(3), beta(3), gamma(1), delta(1), epsilon(1). CF(0) has four main subunits: a, b, b' and c.

It localises to the plastid. The protein localises to the chloroplast thylakoid membrane. Key component of the proton channel; it plays a direct role in the translocation of protons across the membrane. The protein is ATP synthase subunit a, chloroplastic of Panax ginseng (Korean ginseng).